The primary structure comprises 241 residues: tRNA (guanine-N(7)-)-methyltransferase (241 aa).

The S-adenosyl-L-methionine site is built by Glu-76, Glu-101, Asp-128, and Asp-150. Asp-150 is an active-site residue. Residues Lys-154, Asp-186, and 219-222 each bind substrate; that span reads TRYE.

This sequence belongs to the class I-like SAM-binding methyltransferase superfamily. TrmB family.

It carries out the reaction guanosine(46) in tRNA + S-adenosyl-L-methionine = N(7)-methylguanosine(46) in tRNA + S-adenosyl-L-homocysteine. Its pathway is tRNA modification; N(7)-methylguanine-tRNA biosynthesis. Functionally, catalyzes the formation of N(7)-methylguanine at position 46 (m7G46) in tRNA. The sequence is that of tRNA (guanine-N(7)-)-methyltransferase from Cereibacter sphaeroides (strain ATCC 17023 / DSM 158 / JCM 6121 / CCUG 31486 / LMG 2827 / NBRC 12203 / NCIMB 8253 / ATH 2.4.1.) (Rhodobacter sphaeroides).